The sequence spans 261 residues: MASVESRIIAITGGASGIGAATCRLLAERGAAVLCVCDISPKNFDDLKISIKKINPSTKVHCATVDVTSSVEVRQWIEGIISDFGDLHGAVNAAGIAQGAGMRNTPTIAEEVDEEWTRIMNTNLNGVFYCTREEVRAMKGLPATDRSIVNVGSIASVSHMPDVYAYGTSKGACAYFTTCVAADAFPLGIRINNVSPGVTNTPMLPQFAPMAKTFEEIEESYKKEGLSLIEAEDVARTIVWLLSEDSRPVFGANINVGACMP.

Positions 18, 48, 66, 132, 166, 170, and 201 each coordinate NADP(+). Tyr166 functions as the Proton donor in the catalytic mechanism. The active-site Lowers pKa of active site Tyr is Lys170.

Belongs to the short-chain dehydrogenases/reductases (SDR) family.

It carries out the reaction chanoclavine-I + NAD(+) = chanoclavine-I aldehyde + NADH + H(+). Its pathway is alkaloid biosynthesis; ergot alkaloid biosynthesis. Chanoclavine-I dehydrogenase; part of the gene cluster that mediates the biosynthesis of fumiclavanine C, a fungal ergot alkaloid. DmaW catalyzes the first step of ergot alkaloid biosynthesis by condensing dimethylallyl diphosphate (DMAP) and tryptophan to form 4-dimethylallyl-L-tryptophan. The second step is catalyzed by the methyltransferase easF that methylates 4-dimethylallyl-L-tryptophan in the presence of S-adenosyl-L-methionine, resulting in the formation of 4-dimethylallyl-L-abrine. The catalase easC and the FAD-dependent oxidoreductase easE then transform 4-dimethylallyl-L-abrine to chanoclavine-I which is further oxidized by EasD in the presence of NAD(+), resulting in the formation of chanoclavine-I aldehyde. EasA reduces chanoclavine-I aldehyde to dihydrochanoclavine-I aldehyde that spontaneously dehydrates to form 6,8-dimethyl-6,7-didehydroergoline. EasG then catalyzes the reduction of 6,8-dimethyl-6,7-didehydroergoline to form festuclavine. Hydrolysis of festuclavine by easM then leads to the formation of fumigaclavine B which is in turn acetylated by easN to fumigaclavine A. Finally, easL catalyzes the conversion of fumigaclavine A into fumigaclavine C by attaching a dimethylallyl moiety to C-2 of the indole nucleus. This is Chanoclavine-I dehydrogenase easD from Aspergillus fumigatus (strain ATCC MYA-4609 / CBS 101355 / FGSC A1100 / Af293) (Neosartorya fumigata).